The sequence spans 64 residues: Alpha-toxin Amm5 (64 aa).

The 63-residue stretch at 2 to 64 (KDGYIIDDLN…VSIKEKGRCN (63 aa)) folds into the LCN-type CS-alpha/beta domain. Disulfide bonds link C12–C63, C16–C36, C22–C46, and C26–C48. The residue at position 64 (N64) is an Asparagine amide.

In terms of tissue distribution, expressed by the venom gland.

The protein localises to the secreted. In terms of biological role, alpha toxins bind voltage-independently at site-3 of sodium channels (Nav) and inhibit the inactivation of the activated channels, thereby blocking neuronal transmission. This Androctonus mauritanicus mauritanicus (Scorpion) protein is Alpha-toxin Amm5.